Here is a 396-residue protein sequence, read N- to C-terminus: Elongation factor Tu (396 aa).

Positions 10-205 constitute a tr-type G domain; it reads KPHVNIGTIG…AVDESIPDPV (196 aa). A G1 region spans residues 19 to 26; it reads GHVDHGKT. 19–26 contributes to the GTP binding site; it reads GHVDHGKT. Residue Thr-26 coordinates Mg(2+). The segment at 62-66 is G2; that stretch reads GITIN. Residues 83–86 are G3; sequence DAPG. GTP is bound by residues 83 to 87 and 138 to 141; these read DAPGH and NKSD. The tract at residues 138-141 is G4; the sequence is NKSD. The G5 stretch occupies residues 175 to 177; that stretch reads SAL.

Belongs to the TRAFAC class translation factor GTPase superfamily. Classic translation factor GTPase family. EF-Tu/EF-1A subfamily. In terms of assembly, monomer.

It is found in the cytoplasm. The enzyme catalyses GTP + H2O = GDP + phosphate + H(+). Its function is as follows. GTP hydrolase that promotes the GTP-dependent binding of aminoacyl-tRNA to the A-site of ribosomes during protein biosynthesis. The protein is Elongation factor Tu of Mycobacterium marinum (strain ATCC BAA-535 / M).